We begin with the raw amino-acid sequence, 536 residues long: Lysosomal acid glucosylceramidase (536 aa).

An N-terminal signal peptide occupies residues 1-39; sequence MELSSPSREEYPMPRGRVGIMAASLMGLLLLHTVSWVSG. 2 disulfides stabilise this stretch: cysteine 43/cysteine 55 and cysteine 57/cysteine 62. N-linked (GlcNAc...) asparagine glycans are attached at residues asparagine 58, asparagine 98, asparagine 185, and asparagine 208. Glutamate 274 serves as the catalytic Proton donor. Asparagine 309 is a glycosylation site (N-linked (GlcNAc...) asparagine). Residue glutamate 379 is the Nucleophile of the active site. N-linked (GlcNAc...) asparagine glycosylation is present at asparagine 501.

The protein belongs to the glycosyl hydrolase 30 family. In terms of assembly, interacts with saposin-C. Interacts with SCARB2. Interacts with TCP1. Interacts with GRN; this interaction prevents aggregation of GBA1-SCARB2 complex via interaction with HSPA1A upon stress.

The protein resides in the lysosome membrane. It catalyses the reaction a beta-D-glucosyl-(1&lt;-&gt;1')-N-acylsphing-4-enine + H2O = an N-acylsphing-4-enine + D-glucose. The enzyme catalyses a beta-D-galactosyl-(1&lt;-&gt;1')-N-acylsphing-4-enine + H2O = an N-acylsphing-4-enine + D-galactose. The catalysed reaction is cholesteryl 3-beta-D-glucoside + H2O = cholesterol + D-glucose. It carries out the reaction a beta-D-glucosyl-(1&lt;-&gt;1')-N-acylsphing-4-enine + cholesterol = cholesteryl 3-beta-D-glucoside + an N-acylsphing-4-enine. It catalyses the reaction beta-D-glucosyl-N-(9Z-octadecenoyl)-sphing-4E-enine + cholesterol = N-(9Z-octadecenoyl)-sphing-4-enine + cholesteryl 3-beta-D-glucoside. The enzyme catalyses beta-D-glucosyl-N-octanoylsphing-4E-enine + cholesterol = N-octanoylsphing-4-enine + cholesteryl 3-beta-D-glucoside. The catalysed reaction is beta-D-glucosyl-N-dodecanoylsphing-4-enine + cholesterol = N-dodecanoylsphing-4-enine + cholesteryl 3-beta-D-glucoside. It carries out the reaction beta-D-glucosyl-(1&lt;-&gt;1)-N-octadecanoylsphing-4-enine + cholesterol = N-octadecanoylsphing-4-enine + cholesteryl 3-beta-D-glucoside. It catalyses the reaction beta-D-glucosyl-(1&lt;-&gt;1')-N-(15Z-tetracosenoyl)-sphing-4-enine + cholesterol = N-(15Z-tetracosenoyl)-sphing-4-enine + cholesteryl 3-beta-D-glucoside. The enzyme catalyses a beta-D-galactosyl-(1&lt;-&gt;1')-N-acylsphing-4-enine + cholesterol = cholesteryl 3-beta-D-galactoside + an N-acylsphing-4-enine. The catalysed reaction is 1-(beta-D-galactosyl)-N-dodecanoylsphing-4-enine + cholesterol = cholesteryl 3-beta-D-galactoside + N-dodecanoylsphing-4-enine. It carries out the reaction a beta-D-xylosyl-(1&lt;-&gt;1')-N-acylsphing-4-enine + cholesterol = cholesteryl 3-beta-D-xyloside + an N-acylsphing-4-enine. It catalyses the reaction beta-D-xylosyl-(1&lt;-&gt;1')-N-(9Z-octadecenoyl)-sphing-4-enine + cholesterol = cholesteryl 3-beta-D-xyloside + N-(9Z-octadecenoyl)-sphing-4-enine. The protein operates within steroid metabolism; cholesterol metabolism. It participates in sphingolipid metabolism. Functionally, glucosylceramidase that catalyzes, within the lysosomal compartment, the hydrolysis of glucosylceramides/GlcCers (such as beta-D-glucosyl-(1&lt;-&gt;1')-N-acylsphing-4-enine) into free ceramides (such as N-acylsphing-4-enine) and glucose. Plays a central role in the degradation of complex lipids and the turnover of cellular membranes. Through the production of ceramides, participates in the PKC-activated salvage pathway of ceramide formation. Catalyzes the glucosylation of cholesterol, through a transglucosylation reaction where glucose is transferred from GlcCer to cholesterol. GlcCer containing mono-unsaturated fatty acids (such as beta-D-glucosyl-N-(9Z-octadecenoyl)-sphing-4-enine) are preferred as glucose donors for cholesterol glucosylation when compared with GlcCer containing same chain length of saturated fatty acids (such as beta-D-glucosyl-N-octadecanoyl-sphing-4-enine). Under specific conditions, may alternatively catalyze the reverse reaction, transferring glucose from cholesteryl 3-beta-D-glucoside to ceramide. Can also hydrolyze cholesteryl 3-beta-D-glucoside producing glucose and cholesterol. Catalyzes the hydrolysis of galactosylceramides/GalCers (such as beta-D-galactosyl-(1&lt;-&gt;1')-N-acylsphing-4-enine), as well as the transfer of galactose between GalCers and cholesterol in vitro, but with lower activity than with GlcCers. Contrary to GlcCer and GalCer, xylosylceramide/XylCer (such as beta-D-xyosyl-(1&lt;-&gt;1')-N-acylsphing-4-enine) is not a good substrate for hydrolysis, however it is a good xylose donor for transxylosylation activity to form cholesteryl 3-beta-D-xyloside. The chain is Lysosomal acid glucosylceramidase (GBA1) from Bos taurus (Bovine).